A 358-amino-acid polypeptide reads, in one-letter code: COP9 signalosome complex subunit 5b (358 aa).

Met1 carries the N-acetylmethionine modification. The MPN domain maps to 59–196; that stretch reads VKISALALLK…IGAFRTYSKG (138 aa). Positions 142, 144, and 155 each coordinate Zn(2+). Residues 142-155 carry the JAMM motif motif; that stretch reads HSHPGYGCWLSGID. Residues 338 to 349 show a composition bias toward polar residues; sequence MRQSNNKSPTDS. The tract at residues 338–358 is disordered; it reads MRQSNNKSPTDSSDPDPMITY.

The protein belongs to the peptidase M67A family. CSN5 subfamily. Component of the CSN complex, probably composed of CSN1, CSN2, CSN3, CSN4, CSN5 (CSN5A or CSN5B), CSN6 (CSN6A or CSN6B), CSN7 and CSN8. CSN5A or CSN5B are present within distinct CSN complexes each containing only one copy of CSN5. Interacts with itself. In the complex, it is located in the center and probably interacts directly with CSN4 and CSN6A or CSN6B. Also exists as monomeric form. Interacts with CYT1 in vitro and in planta. Interacts with FLZ3. A divalent metal cation is required as a cofactor. As to expression, ubiquitously expressed. Highly expressed in flowers and roots. Expressed at lower level in seedlings and siliques.

The protein localises to the cytoplasm. Its subcellular location is the nucleus. In terms of biological role, probable protease subunit of the COP9 signalosome complex (CSN), a complex involved in various cellular and developmental processes such as photomorphogenesis and auxin and jasmonate responses. The CSN complex is an essential regulator of the ubiquitin (Ubl) conjugation pathway by mediating the deneddylation of the cullin subunits of the SCF-type E3 ligase complexes, leading to decrease the Ubl ligase activity of SCF. In the complex, it probably acts as the catalytic center that mediates the cleavage of Nedd8 from cullins. It however has no metalloprotease activity by itself and requires the other subunits of the CSN complex. The CSN complex is involved in repression of photomorphogenesis in darkness by regulating the activity of COP1-containing Ubl ligase complexes. The complex is also required for degradation of PSIAA6 by regulating the activity of the Ubl ligase SCF-TIR complex. Not involved in CSN's deneddylation/derubylation activity. Essential for the structural integrity of the CSN holocomplex. This Arabidopsis thaliana (Mouse-ear cress) protein is COP9 signalosome complex subunit 5b.